The chain runs to 423 residues: Glucuronoxylanase XynC (423 aa).

The first 33 residues, 1–33, serve as a signal peptide directing secretion; that stretch reads MMSSVKKTICVLLVCFTMMSVMLLGPGVTEVSA. Glutamate 172 acts as the Proton donor in catalysis. The Nucleophile role is filled by glutamate 261.

This sequence belongs to the glycosyl hydrolase 30 family.

The protein resides in the secreted. The catalysed reaction is Endohydrolysis of (1-&gt;4)-beta-D-xylosyl links in some glucuronoarabinoxylans.. It functions in the pathway glycan degradation; xylan degradation. Its function is as follows. Catalyzes the depolymerization of methylglucuronoxylan (MeGAXn). It cleaves the beta-1,4-xylosidic bond penultimate to that linking carbon one of the xylose residue substituted with alpha-1,2-linked 4-O-methyl-D-glucuronate (MeGA). The chain is Glucuronoxylanase XynC (xynC) from Bacillus subtilis.